We begin with the raw amino-acid sequence, 542 residues long: Protein DETOXIFICATION 34 (542 aa).

The next 12 helical transmembrane spans lie at 97 to 117 (APIAFNILCNYGVNSFTSIFV), 127 to 147 (AVAIALSVVSNFSFGFLLGMA), 176 to 196 (ILLGTSVCLLPLYIYATPLLI), 204 to 224 (IAEISGKFTTQIIPQMFALAI), 240 to 260 (IMAWIGFFALTLHIFILYLFI), 272 to 292 (AAFDVSAWGIAIAQVVYVVGW), 316 to 336 (FASAVMLCLEIWYFMTIIVLT), 344 to 364 (IAVGSLSICMNINGWEGMLFI), 390 to 410 (VIVTVIESLVIGVVCAIVILI), 435 to 455 (LLGITMILNSLQPVISGVAVG), 462 to 482 (VAYINLFCYYAFGLPLGFLLG), and 491 to 511 (GIWIGMICGTSLQTLILLYMI).

Belongs to the multi antimicrobial extrusion (MATE) (TC 2.A.66.1) family.

The protein localises to the membrane. This Arabidopsis thaliana (Mouse-ear cress) protein is Protein DETOXIFICATION 34.